A 353-amino-acid polypeptide reads, in one-letter code: Pleckstrin-2 (353 aa).

At M1 the chain carries N-acetylmethionine. The PH 1 domain maps to 4–104 (GVLKEGFLVK…WAFEITGAIH (101 aa)). Phosphoserine is present on S120. The 87-residue stretch at 139-225 (TSTGIRPSPN…DSTALYTFAE (87 aa)) folds into the DEP domain. The PH 2 domain maps to 247-353 (TVVKQGYLSK…EWIEAIKKLT (107 aa)).

Ubiquitous. Most abundant in the thymus, large bowel, small bowel, stomach, and prostate.

The protein resides in the cell projection. Its subcellular location is the lamellipodium membrane. It is found in the cytoplasm. It localises to the cytoskeleton. May help orchestrate cytoskeletal arrangement. Contribute to lamellipodia formation. Overexpression of pleckstrin 2 causes large lamellipodia and peripheral ruffle formation. This Mus musculus (Mouse) protein is Pleckstrin-2 (Plek2).